The chain runs to 159 residues: Phosphopantetheine adenylyltransferase (159 aa).

Thr-10 lines the substrate pocket. Residues 10–11 (TF) and His-18 each bind ATP. Substrate contacts are provided by Lys-42, Leu-74, and Arg-88. ATP contacts are provided by residues 89-91 (GLR), Glu-99, and 124-130 (YAFISSS).

This sequence belongs to the bacterial CoaD family. Homohexamer. Requires Mg(2+) as cofactor.

The protein localises to the cytoplasm. It catalyses the reaction (R)-4'-phosphopantetheine + ATP + H(+) = 3'-dephospho-CoA + diphosphate. Its pathway is cofactor biosynthesis; coenzyme A biosynthesis; CoA from (R)-pantothenate: step 4/5. Its function is as follows. Reversibly transfers an adenylyl group from ATP to 4'-phosphopantetheine, yielding dephospho-CoA (dPCoA) and pyrophosphate. This chain is Phosphopantetheine adenylyltransferase, found in Hydrogenovibrio crunogenus (strain DSM 25203 / XCL-2) (Thiomicrospira crunogena).